Reading from the N-terminus, the 1427-residue chain is DNA-directed RNA polymerase subunit beta' (1427 aa).

Cys66, Cys68, Cys81, and Cys84 together coordinate Zn(2+). The Mg(2+) site is built by Asp472, Asp474, and Asp476. Zn(2+)-binding residues include Cys815, Cys889, Cys896, and Cys899.

This sequence belongs to the RNA polymerase beta' chain family. The RNAP catalytic core consists of 2 alpha, 1 beta, 1 beta' and 1 omega subunit. When a sigma factor is associated with the core the holoenzyme is formed, which can initiate transcription. Mg(2+) serves as cofactor. The cofactor is Zn(2+).

The enzyme catalyses RNA(n) + a ribonucleoside 5'-triphosphate = RNA(n+1) + diphosphate. DNA-dependent RNA polymerase catalyzes the transcription of DNA into RNA using the four ribonucleoside triphosphates as substrates. This Bacteroides thetaiotaomicron (strain ATCC 29148 / DSM 2079 / JCM 5827 / CCUG 10774 / NCTC 10582 / VPI-5482 / E50) protein is DNA-directed RNA polymerase subunit beta'.